Reading from the N-terminus, the 432-residue chain is Enolase (432 aa).

Gln163 lines the (2R)-2-phosphoglycerate pocket. The active-site Proton donor is Glu205. Residues Asp242, Glu288, and Asp315 each coordinate Mg(2+). (2R)-2-phosphoglycerate contacts are provided by Lys340, Arg369, Ser370, and Lys391. Lys340 serves as the catalytic Proton acceptor.

The protein belongs to the enolase family. Mg(2+) is required as a cofactor.

The protein localises to the cytoplasm. Its subcellular location is the secreted. The protein resides in the cell surface. The enzyme catalyses (2R)-2-phosphoglycerate = phosphoenolpyruvate + H2O. It participates in carbohydrate degradation; glycolysis; pyruvate from D-glyceraldehyde 3-phosphate: step 4/5. In terms of biological role, catalyzes the reversible conversion of 2-phosphoglycerate (2-PG) into phosphoenolpyruvate (PEP). It is essential for the degradation of carbohydrates via glycolysis. This is Enolase from Enterococcus faecalis (strain ATCC 700802 / V583).